The chain runs to 364 residues: Coproporphyrin III ferrochelatase (364 aa).

The Fe-coproporphyrin III site is built by R29 and Y118. Fe(2+) is bound by residues H169 and E250.

The protein belongs to the ferrochelatase family.

The protein resides in the cytoplasm. It catalyses the reaction Fe-coproporphyrin III + 2 H(+) = coproporphyrin III + Fe(2+). It functions in the pathway porphyrin-containing compound metabolism; protoheme biosynthesis. Its function is as follows. Involved in coproporphyrin-dependent heme b biosynthesis. Catalyzes the insertion of ferrous iron into coproporphyrin III to form Fe-coproporphyrin III. This is Coproporphyrin III ferrochelatase from Streptococcus pneumoniae serotype 4 (strain ATCC BAA-334 / TIGR4).